We begin with the raw amino-acid sequence, 276 residues long: NADPH-dependent 7-cyano-7-deazaguanine reductase (276 aa).

I83–S85 is a binding site for substrate. S85–K86 contacts NADPH. C184 (thioimide intermediate) is an active-site residue. The active-site Proton donor is the D191. H223–E224 lines the substrate pocket. Residue R252–G253 participates in NADPH binding.

The protein belongs to the GTP cyclohydrolase I family. QueF type 2 subfamily. Homodimer.

It is found in the cytoplasm. It catalyses the reaction 7-aminomethyl-7-carbaguanine + 2 NADP(+) = 7-cyano-7-deazaguanine + 2 NADPH + 3 H(+). Its pathway is tRNA modification; tRNA-queuosine biosynthesis. In terms of biological role, catalyzes the NADPH-dependent reduction of 7-cyano-7-deazaguanine (preQ0) to 7-aminomethyl-7-deazaguanine (preQ1). This Ectopseudomonas mendocina (strain ymp) (Pseudomonas mendocina) protein is NADPH-dependent 7-cyano-7-deazaguanine reductase.